The primary structure comprises 466 residues: Ribosome biogenesis protein YTM1 (466 aa).

Positions 8–95 are ubiquitin-like (UBL) domain; that stretch reads IKINFFTNEE…EASLNLEYTR (88 aa). Residues 105–466 form a sufficient for interaction with ERB1 and association with 66S pre-ribosomes region; sequence SFNNDDWISS…QINKGSDITK (362 aa). WD repeat units lie at residues 120–159, 161–199, 214–253, 291–331, 333–372, 381–421, and 431–466; these read PLSASVKASNMSISQPKILSGSYDGIVRTYNMSGKVEKQY, GHSGPIRSVKWISPTRIVSSGNDRQVRLWKTSIDSNIED, GHKAPVVSLAVEYQNNRILSAGYDKAIGFWSTNYREMTTI, GHSQ…CVDT, TTGYSLLSLLQLPSLNLLVCGSSARHINLFDPRVSSTTTE, GHTN…SLYT, and KGQDKVFSVIWDNDIGIISGGQDKKIQINKGSDITK.

This sequence belongs to the WD repeat WDR12/YTM1 family. As to quaternary structure, component of the NOP7 complex, composed of ERB1, NOP7 and YTM1. The complex is held together by ERB1, which interacts with NOP7 via its N-terminal domain and with YTM1 via a high-affinity interaction between the seven-bladed beta-propeller domains of the 2 proteins. The NOP7 complex associates with the 66S pre-ribosome. Interacts (via UBL domain) with MDN1 (via VWFA/MIDAS domain).

It localises to the nucleus. It is found in the nucleolus. Its subcellular location is the nucleoplasm. Component of the NOP7 complex, which is required for maturation of the 25S and 5.8S ribosomal RNAs and formation of the 60S ribosome. The polypeptide is Ribosome biogenesis protein YTM1 (Debaryomyces hansenii (strain ATCC 36239 / CBS 767 / BCRC 21394 / JCM 1990 / NBRC 0083 / IGC 2968) (Yeast)).